The sequence spans 92 residues: Putative lambdoid prophage defective integrase (92 aa).

Belongs to the 'phage' integrase family.

In Escherichia coli O157:H7, this protein is Putative lambdoid prophage defective integrase (intG).